The primary structure comprises 189 residues: Large ribosomal subunit protein bL12c (189 aa).

2 disordered regions span residues Met1–Pro30 and Glu165–Val189. A chloroplast-targeting transit peptide spans Met1–Ala56. Residues Asn11–Phe24 are compositionally biased toward polar residues. A compositionally biased stretch (basic and acidic residues) spans Glu165–Gly183.

As to quaternary structure, component of the chloroplast large ribosomal subunit (LSU). Mature 70S chloroplast ribosomes of higher plants consist of a small (30S) and a large (50S) subunit. The 30S small subunit contains 1 molecule of ribosomal RNA (16S rRNA) and 24 different proteins. The 50S large subunit contains 3 rRNA molecules (23S, 5S and 4.5S rRNA) and 33 different proteins.

The protein resides in the plastid. The protein localises to the chloroplast. Its function is as follows. Component of the chloroplast ribosome (chloro-ribosome), a dedicated translation machinery responsible for the synthesis of chloroplast genome-encoded proteins, including proteins of the transcription and translation machinery and components of the photosynthetic apparatus. This is Large ribosomal subunit protein bL12c (RPL12) from Spinacia oleracea (Spinach).